Consider the following 139-residue polypeptide: D-ribose pyranase (139 aa).

Catalysis depends on H20, which acts as the Proton donor. Residues D28, H106, and 128-130 (YAN) each bind substrate.

The protein belongs to the RbsD / FucU family. RbsD subfamily. In terms of assembly, homodecamer.

The protein localises to the cytoplasm. It carries out the reaction beta-D-ribopyranose = beta-D-ribofuranose. The protein operates within carbohydrate metabolism; D-ribose degradation; D-ribose 5-phosphate from beta-D-ribopyranose: step 1/2. In terms of biological role, catalyzes the interconversion of beta-pyran and beta-furan forms of D-ribose. In Histophilus somni (strain 129Pt) (Haemophilus somnus), this protein is D-ribose pyranase.